The primary structure comprises 366 residues: Protein-methionine-sulfoxide reductase catalytic subunit MsrP (366 aa).

The segment covering 1-22 (MHNTFTHTKNNTHTKNNTQAKN) has biased composition (low complexity). Residues 1–40 (MHNTFTHTKNNTHTKNNTQAKNSGSQTKSNAVSLNKPRKL) are disordered. The segment at residues 1-76 (MHNTFTHTKN…TLALPASAQA (76 aa)) is a signal peptide (tat-type signal). Over residues 23-33 (SGSQTKSNAVS) the composition is skewed to polar residues. Mo-molybdopterin is bound by residues asparagine 120, 123-124 (YE), cysteine 178, threonine 213, asparagine 265, arginine 270, and 281-283 (SIK).

Belongs to the MsrP family. In terms of assembly, heterodimer of a catalytic subunit (MsrP) and a heme-binding subunit (MsrQ). Mo-molybdopterin serves as cofactor. In terms of processing, predicted to be exported by the Tat system. The position of the signal peptide cleavage has not been experimentally proven.

Its subcellular location is the periplasm. It catalyses the reaction L-methionyl-[protein] + a quinone + H2O = L-methionyl-(S)-S-oxide-[protein] + a quinol. The enzyme catalyses L-methionyl-[protein] + a quinone + H2O = L-methionyl-(R)-S-oxide-[protein] + a quinol. Functionally, part of the MsrPQ system that repairs oxidized periplasmic proteins containing methionine sulfoxide residues (Met-O), using respiratory chain electrons. Thus protects these proteins from oxidative-stress damage caused by reactive species of oxygen and chlorine generated by the host defense mechanisms. MsrPQ is essential for the maintenance of envelope integrity under bleach stress, rescuing a wide series of structurally unrelated periplasmic proteins from methionine oxidation. The catalytic subunit MsrP is non-stereospecific, being able to reduce both (R-) and (S-) diastereoisomers of methionine sulfoxide. The chain is Protein-methionine-sulfoxide reductase catalytic subunit MsrP from Yersinia pestis.